Here is a 372-residue protein sequence, read N- to C-terminus: Aryl-hydrocarbon-interacting protein-like 1 (372 aa).

The PPIase FKBP-type domain occupies 53-145 (REVGQPMHII…DLDELQKEPQ (93 aa)). TPR repeat units lie at residues 178–211 (VPVL…LRNL), 230–263 (NTLI…HPGI), and 264–297 (VKAY…EPSM). The disordered stretch occupies residues 325–372 (NMLSQGATWSPAEPPAEPPAESSTEPPAEPPAEPPAELTLTPGHPLQH).

In terms of assembly, interacts with NUB1.

It localises to the cytoplasm. The protein resides in the nucleus. May be important in protein trafficking and/or protein folding and stabilization. The protein is Aryl-hydrocarbon-interacting protein-like 1 (AIPL1) of Saimiri boliviensis boliviensis (Bolivian squirrel monkey).